We begin with the raw amino-acid sequence, 360 residues long: Peptide chain release factor 1 (360 aa).

An N5-methylglutamine modification is found at glutamine 237.

This sequence belongs to the prokaryotic/mitochondrial release factor family. Post-translationally, methylated by PrmC. Methylation increases the termination efficiency of RF1.

The protein localises to the cytoplasm. In terms of biological role, peptide chain release factor 1 directs the termination of translation in response to the peptide chain termination codons UAG and UAA. The sequence is that of Peptide chain release factor 1 from Pseudomonas syringae pv. syringae (strain B728a).